The primary structure comprises 1164 residues: WASH complex subunit 5 (1164 aa).

The protein belongs to the strumpellin family. Probable component of the WASH complex.

The polypeptide is WASH complex subunit 5 (Dictyostelium discoideum (Social amoeba)).